We begin with the raw amino-acid sequence, 276 residues long: MNIWDIIVAIILGIVEGLTEYAPVSSTGHMIIVDDVWLKSKELLTPEAANTFKVVIQLGSILAVAFVFKDRILNLLGMKKNITEEQKSGNRLSIAQIAVGLVPAAVLGFLFEDYIDQYLFSVRTVAVGLIAGAVLMLAADWINRRKDTTDSVDRMTYKQALGMGLFQCLALWPGFSRSGSTISGGVILGLSHRAAADFTFIMAIPIMMGASLLSLIKNWAYLSADLLPFFIAGFISAFIVALFVVRFFLRLINKIKLVPFAIYRIVLGLLLFILFL.

The next 7 membrane-spanning stretches (helical) occupy residues 3-23 (IWDIIVAIILGIVEGLTEYAP), 48-68 (AANTFKVVIQLGSILAVAFVF), 92-112 (LSIAQIAVGLVPAAVLGFLFE), 119-139 (LFSVRTVAVGLIAGAVLMLAA), 196-216 (ADFTFIMAIPIMMGASLLSLI), 225-245 (DLLPFFIAGFISAFIVALFVV), and 255-275 (IKLVPFAIYRIVLGLLLFILF).

It belongs to the UppP family.

It localises to the cell membrane. The enzyme catalyses di-trans,octa-cis-undecaprenyl diphosphate + H2O = di-trans,octa-cis-undecaprenyl phosphate + phosphate + H(+). Catalyzes the dephosphorylation of undecaprenyl diphosphate (UPP). Confers resistance to bacitracin. The polypeptide is Undecaprenyl-diphosphatase 2 (Bacillus licheniformis (strain ATCC 14580 / DSM 13 / JCM 2505 / CCUG 7422 / NBRC 12200 / NCIMB 9375 / NCTC 10341 / NRRL NRS-1264 / Gibson 46)).